A 179-amino-acid polypeptide reads, in one-letter code: Diphosphoinositol polyphosphate phosphohydrolase 2 (179 aa).

Substrate contacts are provided by residues arginine 9, 17–19, and 38–40; these read KKR and SSR. In terms of domain architecture, Nudix hydrolase spans 17–143; that stretch reads KKRAACLCFR…VHAEYLEKLK (127 aa). Residues glycine 49 and glutamate 65 each coordinate Mg(2+). The Nudix box signature appears at 50–71; the sequence is GGMEPEEEPGGAAVREVYEEAG. Glutamate 68 serves as the catalytic Proton acceptor. Mg(2+) is bound at residue glutamate 69. Substrate contacts are provided by residues 88–90, arginine 114, and lysine 132; that span reads RKH.

This sequence belongs to the Nudix hydrolase family. DIPP subfamily. Mg(2+) is required as a cofactor. Mn(2+) serves as cofactor.

It localises to the cytoplasm. The catalysed reaction is diphospho-myo-inositol polyphosphate + H2O = myo-inositol polyphosphate + phosphate.. It carries out the reaction 5-diphospho-1D-myo-inositol 1,2,3,4,6-pentakisphosphate + H2O = 1D-myo-inositol hexakisphosphate + phosphate + H(+). The enzyme catalyses 3,5-bis(diphospho)-1D-myo-inositol 1,2,4,6-tetrakisphosphate + H2O = 3-diphospho-1D-myo-inositol 1,2,4,5,6-pentakisphosphate + phosphate + 2 H(+). It catalyses the reaction 5-diphospho-1D-myo-inositol 1,3,4,6-tetrakisphosphate + H2O = 1D-myo-inositol 1,3,4,5,6-pentakisphosphate + phosphate + H(+). The catalysed reaction is P(1),P(6)-bis(5'-adenosyl) hexaphosphate + H2O = 2 ATP + 2 H(+). It carries out the reaction P(1),P(5)-bis(5'-adenosyl) pentaphosphate + H2O = ADP + ATP + 2 H(+). The enzyme catalyses 5-phospho-alpha-D-ribose 1-diphosphate + H2O = alpha-D-ribose 1,5-bisphosphate + phosphate + H(+). Functionally, cleaves the beta-phosphate from diphosphoinositol polyphosphates such as PP-InsP5 (diphosphoinositol pentakisphosphate), PP-InsP4 (diphosphoinositol tetrakisphosphate) and [PP]2-InsP4 (bisdiphosphoinositol tetrakisphosphate), suggesting that it may play a role in signal transduction. Diadenosine polyphosphates, particularly Ap6A (P(1),P(6)-bis(5a-adenosyl) hexaphosphate) and Ap5A (P(1),P(5)-bis(5'-adenosyl) pentaphosphate) are downstream effectors of a signaling cascade that regulates cardiac KATP channels, can also be substrates, although with lower preference than the diphosphoinositol polyphosphates. Can also catalyze the hydrolysis of 5-phosphoribose 1-diphosphate, generating the glycolytic activator ribose 1,5-bisphosphate. Does not play a role in U8 snoRNA decapping activity. Binds U8 snoRNA. This Mus musculus (Mouse) protein is Diphosphoinositol polyphosphate phosphohydrolase 2.